We begin with the raw amino-acid sequence, 331 residues long: Flagellar P-ring protein (331 aa).

Positions 1 to 22 (MRKVTIFIIIIVALTGFGSVRI) are cleaved as a signal peptide.

Belongs to the FlgI family. As to quaternary structure, the basal body constitutes a major portion of the flagellar organelle and consists of four rings (L,P,S, and M) mounted on a central rod.

The protein resides in the periplasm. Its subcellular location is the bacterial flagellum basal body. Its function is as follows. Assembles around the rod to form the L-ring and probably protects the motor/basal body from shearing forces during rotation. In Pseudothermotoga lettingae (strain ATCC BAA-301 / DSM 14385 / NBRC 107922 / TMO) (Thermotoga lettingae), this protein is Flagellar P-ring protein.